The chain runs to 379 residues: Guanine nucleotide-binding protein G(s) subunit alpha (379 aa).

The tract at residues 1 to 25 (MGCLGNSKTEDQRNEEKVQRETNKK) is disordered. Glycine 2 is lipidated: N-palmitoyl glycine. Cysteine 3 carries S-palmitoyl cysteine lipidation. Residues 8-25 (KTEDQRNEEKVQRETNKK) show a composition bias toward basic and acidic residues. In terms of domain architecture, G-alpha spans 39–379 (ATHRLLLLGA…RMHLRQYELL (341 aa)). Residues 42-55 (RLLLLGAGESGKSS) are G1 motif. GTP-binding positions include 47–55 (GAGESGKSS), 182–189 (LLRCRVLT), 208–212 (DVGGQ), 277–280 (NKQD), and alanine 351. 2 residues coordinate Mg(2+): serine 54 and threonine 189. The segment at 181 to 189 (DLLRCRVLT) is G2 motif. Residues 204 to 213 (FHMFDVGGQR) form a G3 motif region. The G4 motif stretch occupies residues 273-280 (ILFLNKQD). Residues 349–354 (TCAVDT) form a G5 motif region.

It belongs to the G-alpha family. G(s) subfamily. As to quaternary structure, heterotrimeric G proteins are composed of 3 units; alpha, beta and gamma. The alpha chain contains the guanine nucleotide binding site.

It is found in the cell membrane. Its function is as follows. Guanine nucleotide-binding proteins (G proteins) function as transducers in numerous signaling pathways controlled by G protein-coupled receptors (GPCRs). Signaling involves the activation of adenylyl cyclases, resulting in increased levels of the signaling molecule cAMP. GNAS functions downstream of several GPCRs, including beta-adrenergic receptors. Stimulates the Ras signaling pathway. In Xenopus laevis (African clawed frog), this protein is Guanine nucleotide-binding protein G(s) subunit alpha (gnas).